We begin with the raw amino-acid sequence, 506 residues long: MAFLLFFVFVTAAVLCFVVPAFLLLCTSVQRRRDVGQGGGRDWQKKKKLRLPPGSMGWPYVGETLQLYSQDPNVFFASKQKRYGEIFKTNLLGCPCVMLASPEAARFVLVSQARLFKPTYPPSKERMIGPSALFFHQGEYHLRLRRLVQAALAPDSLRALVPDVDAAVAATLAAWSGGHVASTFHAMKKLSFDVGVVTIFGGRLGRRHREELRTNYSVVERGYNCFPNRFPGTLYHKAIQARKRLRAILSEIVAERRARGGGGDDLLGGLMRSRDDGTAGAVALLTDDQIADNVVGVLFAAQDTTASVLTWILKYLHDSPKLLEAVKAEQMAIYVANEGGKRPLTWTQTRSMTLTHQVILESLRMASIISFTFREAVADVEYKGFLIPKGWKVMPLFRNIHHNPDYFQDPQKFDPSRFKVAPRPSTFLPFGSGVHACPGNELAKLEMLVLVHRLVTAYRWEIVGASDEVEYSPFPVPRGGLNAKLWKQEAEEDMYMAMGTITAAGA.

The chain crosses the membrane as a helical span at residues 3 to 23; the sequence is FLLFFVFVTAAVLCFVVPAFL. C437 is a heme binding site.

The protein belongs to the cytochrome P450 family. It depends on heme as a cofactor. In internodes and expanding leaves. Weak expression in seedlings.

The protein resides in the membrane. The catalysed reaction is 2-cis-(+)-abscisate + reduced [NADPH--hemoprotein reductase] + O2 = (+)-8'-hydroxyabscisate + oxidized [NADPH--hemoprotein reductase] + H2O + H(+). It participates in plant hormone degradation; abscisic acid degradation. Involved in the oxidative degradation of abscisic acid. The chain is Abscisic acid 8'-hydroxylase 2 (CYP707A6) from Oryza sativa subsp. indica (Rice).